Here is a 365-residue protein sequence, read N- to C-terminus: Succinyl-diaminopimelate desuccinylase (365 aa).

His-64 is a Zn(2+) binding site. The active site involves Asp-66. Asp-95 provides a ligand contact to Zn(2+). The active-site Proton acceptor is Glu-125. Glu-126, Glu-154, and His-339 together coordinate Zn(2+).

Belongs to the peptidase M20A family. DapE subfamily. Homodimer. It depends on Zn(2+) as a cofactor. The cofactor is Co(2+).

The catalysed reaction is N-succinyl-(2S,6S)-2,6-diaminopimelate + H2O = (2S,6S)-2,6-diaminopimelate + succinate. Its pathway is amino-acid biosynthesis; L-lysine biosynthesis via DAP pathway; LL-2,6-diaminopimelate from (S)-tetrahydrodipicolinate (succinylase route): step 3/3. Its function is as follows. Catalyzes the hydrolysis of N-succinyl-L,L-diaminopimelic acid (SDAP), forming succinate and LL-2,6-diaminopimelate (DAP), an intermediate involved in the bacterial biosynthesis of lysine and meso-diaminopimelic acid, an essential component of bacterial cell walls. In Campylobacter curvus (strain 525.92), this protein is Succinyl-diaminopimelate desuccinylase.